Consider the following 512-residue polypeptide: Mannose-1-phosphate guanylyltransferase (512 aa).

This sequence belongs to the mannose-6-phosphate isomerase type 2 family.

The enzyme catalyses alpha-D-mannose 1-phosphate + GTP + H(+) = GDP-alpha-D-mannose + diphosphate. The polypeptide is Mannose-1-phosphate guanylyltransferase (noeJ) (Sinorhizobium fredii (strain NBRC 101917 / NGR234)).